The primary structure comprises 83 residues: Protein ShK-like4 (83 aa).

An N-terminal signal peptide occupies residues 1 to 21; sequence MDTRVIAVLFVAIMVLSSTNA. Residues 22–48 constitute a propeptide that is removed on maturation; that stretch reads LPKQKGSYKNMNHADFLKGLDRASSKR. 3 disulfides stabilise this stretch: Cys-50–Cys-82, Cys-57–Cys-75, and Cys-67–Cys-79. The ShKT domain occupies 50–83; it reads CRDSHWSCFFQSNYEDICSTAQAEECALSCGLCE.

In terms of processing, contains 3 disulfide bonds. In terms of tissue distribution, expressed in various neurons (ectodermal sensory cells) (in planulae and primary polyps). Not expressed in nematocytes.

Probable neuropeptide. The polypeptide is Protein ShK-like4 (Nematostella vectensis (Starlet sea anemone)).